A 72-amino-acid polypeptide reads, in one-letter code: VIP peptides (72 aa).

Isoleucine 27 is modified (isoleucine amide). Asparagine 72 is modified (asparagine amide).

This sequence belongs to the glucagon family.

Its subcellular location is the secreted. Functionally, VIP is a neuropeptide involved in a diverse array of physiological processes through activating the PACAP subfamily of class B1 G protein-coupled receptors: VIP receptor 1 (VPR1) and VIP receptor 2 (VPR2). Abundantly expressed throughout the CNS and peripheral nervous systems where they primarily exert neuroprotective and immune modulatory roles. Also causes vasodilation, lowers arterial blood pressure, stimulates myocardial contractility, increases glycogenolysis and relaxes the smooth muscle of trachea, stomach and gall bladder. In terms of biological role, PHM-27 is a bioactive form from proteolysis of the same precursor protein, that causes vasodilation. It is a potent agonist of the calcitonin receptor CALCR, with similar efficacy as calcitonin. This Oryctolagus cuniculus (Rabbit) protein is VIP peptides (VIP).